The sequence spans 128 residues: Holo-[acyl-carrier-protein] synthase (128 aa).

Asp-8 and Glu-57 together coordinate Mg(2+).

It belongs to the P-Pant transferase superfamily. AcpS family. Mg(2+) is required as a cofactor.

The protein localises to the cytoplasm. The catalysed reaction is apo-[ACP] + CoA = holo-[ACP] + adenosine 3',5'-bisphosphate + H(+). Its function is as follows. Transfers the 4'-phosphopantetheine moiety from coenzyme A to a Ser of acyl-carrier-protein. The protein is Holo-[acyl-carrier-protein] synthase of Syntrophus aciditrophicus (strain SB).